The following is a 31-amino-acid chain: Cytochrome b6-f complex subunit 6 (31 aa).

A helical membrane pass occupies residues 4–24 (IFSYIALLLSALVITLTCYIG).

Belongs to the PetL family. The 4 large subunits of the cytochrome b6-f complex are cytochrome b6, subunit IV (17 kDa polypeptide, PetD), cytochrome f and the Rieske protein, while the 4 small subunits are PetG, PetL, PetM and PetN. The complex functions as a dimer.

It localises to the plastid. It is found in the chloroplast thylakoid membrane. Component of the cytochrome b6-f complex, which mediates electron transfer between photosystem II (PSII) and photosystem I (PSI), cyclic electron flow around PSI, and state transitions. PetL is important for photoautotrophic growth as well as for electron transfer efficiency and stability of the cytochrome b6-f complex. This is Cytochrome b6-f complex subunit 6 from Chlorella vulgaris (Green alga).